The following is a 265-amino-acid chain: 3-methyl-2-oxobutanoate hydroxymethyltransferase (265 aa).

Mg(2+) is bound by residues Asp-43 and Asp-82. 3-methyl-2-oxobutanoate-binding positions include 43–44 (DS), Asp-82, and Lys-111. Glu-113 provides a ligand contact to Mg(2+). Glu-180 (proton acceptor) is an active-site residue.

It belongs to the PanB family. In terms of assembly, homodecamer; pentamer of dimers. Mg(2+) serves as cofactor.

The protein localises to the cytoplasm. It carries out the reaction 3-methyl-2-oxobutanoate + (6R)-5,10-methylene-5,6,7,8-tetrahydrofolate + H2O = 2-dehydropantoate + (6S)-5,6,7,8-tetrahydrofolate. It participates in cofactor biosynthesis; (R)-pantothenate biosynthesis; (R)-pantoate from 3-methyl-2-oxobutanoate: step 1/2. In terms of biological role, catalyzes the reversible reaction in which hydroxymethyl group from 5,10-methylenetetrahydrofolate is transferred onto alpha-ketoisovalerate to form ketopantoate. This is 3-methyl-2-oxobutanoate hydroxymethyltransferase from Francisella tularensis subsp. holarctica (strain OSU18).